A 411-amino-acid polypeptide reads, in one-letter code: Cytochrome P450 monooxygenase sirE (411 aa).

Residues Asn12 and Asn149 are each glycosylated (N-linked (GlcNAc...) asparagine). The helical transmembrane segment at 181-203 (FLNVISIFTVMMASLNVLYDILA) threads the bilayer. A glycan (N-linked (GlcNAc...) asparagine) is linked at Asn342. Residue Cys352 coordinates heme.

It belongs to the cytochrome P450 family. The cofactor is heme.

The protein resides in the membrane. It participates in mycotoxin biosynthesis. Cytochrome P450 monooxygenase; part of the gene cluster that mediates the biosynthesis of sirodesmin PL, an epipolythiodioxopiperazine (ETP) characterized by a disulfide bridged cyclic dipeptide and that acts as a phytotoxin which is involved in the blackleg didease of canola. SirD catalyzes the O-prenylation of L-tyrosine (L-Tyr) in the presence of dimethylallyl diphosphate (DMAPP) to yield 4-O-dimethylallyl-L-Tyr, and therefore represents probably the first pathway-specific enzyme in the biosynthesis of sirodesmin PL. 4-O-dimethylallyl-L-Tyr, then undergoes condensation with L-Ser in a reaction catalyzed by the non-ribosomal peptide synthase sirP to form the diketopiperazine (DKP) backbone. Further bishydroxylation of the DKP performed by the cytochrome P450 monooxygenase sirC leads to the production of the intermediate phomamide. This step is essential to form the reactive thiol group required for toxicity of sirodesmin PL. The next steps of sirodesmin biosynthesis are not well understood yet, but some predictions could be made from intermediate compounds identification. Phomamide is converted into phomalizarine via oxidation, probably by sirT. Further oxidation, methylation (by sirM or sirN) and reduction steps convert phomalizarine to deacetyl sirodesmin. Finally, acetyltransferase sirH probably acetylates deacetyl sirodesmin to produce sirodesmin PL. This Leptosphaeria maculans (Blackleg fungus) protein is Cytochrome P450 monooxygenase sirE.